The primary structure comprises 223 residues: Ribonuclease HII (223 aa).

Residues 32-223 form the RNase H type-2 domain; it reads LYIAGVDEVG…LKKRYRDYMS (192 aa). 3 residues coordinate a divalent metal cation: aspartate 38, glutamate 39, and aspartate 130.

Belongs to the RNase HII family. Requires Mn(2+) as cofactor. It depends on Mg(2+) as a cofactor.

Its subcellular location is the cytoplasm. The enzyme catalyses Endonucleolytic cleavage to 5'-phosphomonoester.. Functionally, endonuclease that specifically degrades the RNA of RNA-DNA hybrids. This chain is Ribonuclease HII, found in Bartonella henselae (strain ATCC 49882 / DSM 28221 / CCUG 30454 / Houston 1) (Rochalimaea henselae).